Consider the following 397-residue polypeptide: Probable sugar efflux transporter (397 aa).

The next 12 membrane-spanning stretches (helical) occupy residues 15-35 (VVTLAIAAFIFNTTEFVPVGL), 50-70 (VGIMLTIYAWVVALMSLPFML), 81-101 (LICLFVLFIASHVLSFLAWNF), 103-123 (VLVISRIGIAFAHAVFWSITA), 136-156 (AQALSLIATGTALAMVLGLPI), 169-189 (TFFAIGIGALITLVCLIKLLP), 209-229 (PALMSIYLLTVVVVTAHYTAY), 246-266 (FATVLLLILGGAGIIGSVVFG), 275-295 (PLISIAIMLLVICLMLLLPAA), 301-321 (LAVLSIFWGIAIMVIGLGMQV), 333-353 (VAMALFSGIFNIGIGAGALVG), and 364-384 (TIGYVGAVPALAALVWSIIIF).

Belongs to the major facilitator superfamily. SotB (TC 2.A.1.2) family.

Its subcellular location is the cell inner membrane. Functionally, involved in the efflux of sugars. The physiological role may be the reduction of the intracellular concentration of toxic sugars or sugar metabolites. The protein is Probable sugar efflux transporter of Citrobacter koseri (strain ATCC BAA-895 / CDC 4225-83 / SGSC4696).